The following is a 485-amino-acid chain: NADH-quinone oxidoreductase subunit N (485 aa).

14 helical membrane-spanning segments follow: residues 8–28 (LIALLPLLIVGLTVVVVMLSI), 35–55 (FINTTLTVIGLNLALLSLYFV), 75–95 (LYIGLVLVASLATATFAYSWL), 104–124 (EFYLLVLIATVGGILLACANH), 125–145 (LASLFIGIELLTLPLFGLIGY), 159–179 (YMLLSAAASSFMLFGIALLYA), 203–223 (ILSGLGMLVVGLGFKLSLVPF), 235–255 (PAPVSTFLATASKIAIFAVVI), 271–291 (TVLTVIAIASMLFGNLMALTQ), 297–317 (LLGYSSIAHLGYLLVALVAVQ), 326–346 (VGIYLAGYLFSSIGAFGVVSL), 383–403 (LAGIPMTFGFIGKFYVIVLGV), 406–426 (ELWWLTGAVVVGSAIGLYYYL), and 455–475 (MVVLISALLVLALGIWPQPLI).

The protein belongs to the complex I subunit 2 family. As to quaternary structure, NDH-1 is composed of 13 different subunits. Subunits NuoA, H, J, K, L, M, N constitute the membrane sector of the complex.

Its subcellular location is the cell inner membrane. The catalysed reaction is a quinone + NADH + 5 H(+)(in) = a quinol + NAD(+) + 4 H(+)(out). Functionally, NDH-1 shuttles electrons from NADH, via FMN and iron-sulfur (Fe-S) centers, to quinones in the respiratory chain. The immediate electron acceptor for the enzyme in this species is believed to be ubiquinone. Couples the redox reaction to proton translocation (for every two electrons transferred, four hydrogen ions are translocated across the cytoplasmic membrane), and thus conserves the redox energy in a proton gradient. The sequence is that of NADH-quinone oxidoreductase subunit N from Photorhabdus laumondii subsp. laumondii (strain DSM 15139 / CIP 105565 / TT01) (Photorhabdus luminescens subsp. laumondii).